The sequence spans 158 residues: Non-secretory ribonuclease (158 aa).

An N-terminal signal peptide occupies residues 1 to 27 (MVPKLFTSQICLLLLLGLLGVEGSLHA). Catalysis depends on His-42, which acts as the Proton acceptor. 4 cysteine pairs are disulfide-bonded: Cys-50–Cys-110, Cys-64–Cys-121, Cys-82–Cys-136, and Cys-89–Cys-98. Tyr-60 carries the 3'-nitrotyrosine modification. Residue 65–69 (KNQNT) participates in substrate binding. N-linked (GlcNAc...) asparagine glycosylation is found at Asn-86, Asn-92, and Asn-111. His-153 functions as the Proton donor in the catalytic mechanism.

Belongs to the pancreatic ribonuclease family. In terms of assembly, interacts with and forms a tight 1:1 complex with RNH1. Dimerization of two such complexes may occur.

It localises to the lysosome. Its subcellular location is the cytoplasmic granule. It carries out the reaction an [RNA] containing cytidine + H2O = an [RNA]-3'-cytidine-3'-phosphate + a 5'-hydroxy-ribonucleotide-3'-[RNA].. The enzyme catalyses an [RNA] containing uridine + H2O = an [RNA]-3'-uridine-3'-phosphate + a 5'-hydroxy-ribonucleotide-3'-[RNA].. Functionally, this is a non-secretory ribonuclease. It is a pyrimidine specific nuclease with a slight preference for U. Cytotoxin and helminthotoxin. Possesses a wide variety of biological activities. This Aotus trivirgatus (Three-striped night monkey) protein is Non-secretory ribonuclease (RNASE2).